Reading from the N-terminus, the 418-residue chain is Putative ion-transport protein YfeO (418 aa).

12 helical membrane-spanning segments follow: residues 10-30 (LLLSLPAVAIGIASSLILIMV), 54-74 (DSPLWIIGVLTLTGIAVGLVI), 99-119 (ALPGLIVALILGLAGGVSLGP), 120-140 (EHPIMTVNIALAVAIGARLLP), 149-169 (ILASAGTIGALFGTPVAAALI), 186-206 (LFAPLMAAAAGALTTGLFFHP), 223-243 (ILSGAIVAAIAIAAGMVAVWC), 258-278 (VFVLGIGGLILGILGVIGGPV), 300-320 (DYFLLAVIKLAALVVAAASGF), 322-342 (GGRIFPAVFVGVALGLMLHEH), 343-363 (VPAVPAAITVSCAILGIVLVV), and 371-391 (LFMAAVVVPNTTLLPLLCIVM).

Belongs to the chloride channel (TC 2.A.49) family.

Its subcellular location is the cell membrane. The chain is Putative ion-transport protein YfeO from Escherichia coli O45:K1 (strain S88 / ExPEC).